The primary structure comprises 77 residues: Cysteine-rich protein 1 (77 aa).

The 62-residue stretch at 2 to 63 (PKCPKCDKEV…HPCYSAMFGP (62 aa)) folds into the LIM zinc-binding domain. 2 positions are modified to N6-acetyllysine: Lys9 and Lys22. Position 68 is an omega-N-methylarginine (Arg68).

Its function is as follows. Seems to have a role in zinc absorption and may function as an intracellular zinc transport protein. The sequence is that of Cysteine-rich protein 1 (Crip1) from Mus musculus (Mouse).